Here is a 347-residue protein sequence, read N- to C-terminus: Dual-specificity RNA methyltransferase RlmN (347 aa).

Glutamate 93 (proton acceptor) is an active-site residue. The Radical SAM core domain occupies aspartate 99 to aspartate 327. Residues cysteine 106 and cysteine 332 are joined by a disulfide bond. [4Fe-4S] cluster contacts are provided by cysteine 113, cysteine 117, and cysteine 120. S-adenosyl-L-methionine contacts are provided by residues glycine 158–glutamate 159, serine 190, serine 213–asparagine 215, and asparagine 289. Cysteine 332 acts as the S-methylcysteine intermediate in catalysis.

The protein belongs to the radical SAM superfamily. RlmN family. It depends on [4Fe-4S] cluster as a cofactor.

It is found in the cytoplasm. The enzyme catalyses adenosine(2503) in 23S rRNA + 2 reduced [2Fe-2S]-[ferredoxin] + 2 S-adenosyl-L-methionine = 2-methyladenosine(2503) in 23S rRNA + 5'-deoxyadenosine + L-methionine + 2 oxidized [2Fe-2S]-[ferredoxin] + S-adenosyl-L-homocysteine. It catalyses the reaction adenosine(37) in tRNA + 2 reduced [2Fe-2S]-[ferredoxin] + 2 S-adenosyl-L-methionine = 2-methyladenosine(37) in tRNA + 5'-deoxyadenosine + L-methionine + 2 oxidized [2Fe-2S]-[ferredoxin] + S-adenosyl-L-homocysteine. Its function is as follows. Specifically methylates position 2 of adenine 2503 in 23S rRNA and position 2 of adenine 37 in tRNAs. m2A2503 modification seems to play a crucial role in the proofreading step occurring at the peptidyl transferase center and thus would serve to optimize ribosomal fidelity. This Pelobacter propionicus (strain DSM 2379 / NBRC 103807 / OttBd1) protein is Dual-specificity RNA methyltransferase RlmN.